Consider the following 476-residue polypeptide: Cytosolic iron-sulfur assembly component 3 (476 aa).

The residue at position 2 (Ala2) is an N-acetylalanine. Cys24, Cys71, Cys74, Cys77, Cys190, and Cys246 together coordinate [4Fe-4S] cluster. The interval Asp297–Ser316 is disordered. [4Fe-4S] cluster-binding residues include Cys395 and Cys399.

The protein belongs to the NARF family. As to quaternary structure, external component of the CIA complex. In the CIA complex, interacts directly with CIAO1 and MMS19.

Component of the cytosolic iron-sulfur protein assembly (CIA) complex, a multiprotein complex that mediates the incorporation of iron-sulfur cluster into extramitochondrial Fe/S proteins. Seems to negatively regulate the level of HIF1A expression, although this effect could be indirect. In Mus musculus (Mouse), this protein is Cytosolic iron-sulfur assembly component 3 (Ciao3).